The following is a 320-amino-acid chain: Ferrochelatase (320 aa).

2 residues coordinate Fe cation: His-194 and Glu-275.

It belongs to the ferrochelatase family. Monomer.

It is found in the cytoplasm. It catalyses the reaction heme b + 2 H(+) = protoporphyrin IX + Fe(2+). Its pathway is porphyrin-containing compound metabolism; protoheme biosynthesis; protoheme from protoporphyrin-IX: step 1/1. Its function is as follows. Catalyzes the ferrous insertion into protoporphyrin IX. The polypeptide is Ferrochelatase (Shigella dysenteriae serotype 1 (strain Sd197)).